We begin with the raw amino-acid sequence, 375 residues long: Growth/differentiation factor 8 (375 aa).

The N-terminal stretch at 1–18 (MQRLQICVYIYLFVLIVA) is a signal peptide. Residues 19-266 (GPVDLSENSE…VTDTPKRSRR (248 aa)) constitute a propeptide that is removed on maturation. The N-linked (GlcNAc...) asparagine glycan is linked to Asn-71. 3 disulfide bridges follow: Cys-281/Cys-340, Cys-309/Cys-372, and Cys-313/Cys-374.

This sequence belongs to the TGF-beta family. As to quaternary structure, homodimer; disulfide-linked. Interacts with WFIKKN2, leading to inhibit its activity. Interacts with FSTL3. Synthesized as large precursor molecule that undergoes proteolytic cleavage to generate an N-terminal propeptide and a disulfide linked C-terminal dimer, which is the biologically active molecule. The circulating form consists of a latent complex of the C-terminal dimer and other proteins, including its propeptide, which maintain the C-terminal dimer in a latent, inactive state. Ligand activation requires additional cleavage of the prodomain by a tolloid-like metalloproteinase.

The protein localises to the secreted. In terms of biological role, acts specifically as a negative regulator of skeletal muscle growth. The sequence is that of Growth/differentiation factor 8 (MSTN) from Vulpes vulpes (Red fox).